The following is a 91-amino-acid chain: Probable Fe(2+)-trafficking protein (91 aa).

Belongs to the Fe(2+)-trafficking protein family.

Functionally, could be a mediator in iron transactions between iron acquisition and iron-requiring processes, such as synthesis and/or repair of Fe-S clusters in biosynthetic enzymes. This Shewanella amazonensis (strain ATCC BAA-1098 / SB2B) protein is Probable Fe(2+)-trafficking protein.